A 695-amino-acid chain; its full sequence is MRRHRPYLDGVAAAAATFLLAVLLHAPLAAGEDEPPPWVLCGPYPPSGNYSKNGTYQVNLDLLSTTLPKNTSSSPAMYATGTVGDVPDKVYGLALCRGDANASACERCVAAALRDAPRRCPLVKDVLVFYDLCQLRYSNRDFFLDDDYFVTTYTLQRSRRVGAAAAAAFDAAVAVLVNATADYAAADSSRRYGTGEEEGVDGDSDRPKIYALAQCTPDKTPEVCRTCLSTVIGQLPKEFSGRTGGGMFGVWCNFRYEVFPFFSGRPLLQLPAFVETPPPPPSPSATSGEKTKNRIGTVLAIVMPAIAAILLMVVACFCCWKRIKKRRPEEQTFLSYSVSSDDIQSIDSLILDLPTIRVATDDFADTKMIGQGGFGMVYKGVLPDGQEIAVKRLCQSSRQGIGELKSELILVAKLYHKNLVRLIGVCLEQQEKILVYEYMPNGSLDIVLFDTDKNRELDWGKRFKIINGIARGLQYLHEDSQLKIVHRDLKASNILLDFDYSPKISDFGLAKIFGGDQSEDVTNRIAGTYGYMAPEYAMRGNYSIKSDVFSFGVLVLEIITGRRNTGSYDSGQDVDLLNLVWEHWTRGNVVELIDPSMGDHPPIEQMLKCIHIGLLCVQKKPASRPTISSVNIMLSSNTVRLPSLSRPAFCIQEVSASDSSNPYSERYPRPRHSGYSDNSTVVSSNDLSITELVPR.

The first 31 residues, 1-31 (MRRHRPYLDGVAAAAATFLLAVLLHAPLAAG), serve as a signal peptide directing secretion. At 32–294 (EDEPPPWVLC…ATSGEKTKNR (263 aa)) the chain is on the extracellular side. Gnk2-homologous domains are found at residues 38 to 142 (WVLC…NRDF) and 151 to 261 (TTYT…VFPF). Residues Asn49, Asn53, Asn70, and Asn101 are each glycosylated (N-linked (GlcNAc...) asparagine). 2 cysteine pairs are disulfide-bonded: Cys96-Cys105 and Cys108-Cys133. Asn178 carries an N-linked (GlcNAc...) asparagine glycan. 2 cysteine pairs are disulfide-bonded: Cys215-Cys224 and Cys227-Cys252. Residues 295–315 (IGTVLAIVMPAIAAILLMVVA) traverse the membrane as a helical segment. Residues 316-695 (CFCCWKRIKK…DLSITELVPR (380 aa)) are Cytoplasmic-facing. The Protein kinase domain occupies 363 to 634 (FADTKMIGQG…PTISSVNIML (272 aa)). Residues 369–377 (IGQGGFGMV) and Lys391 contribute to the ATP site. Asp488 serves as the catalytic Proton acceptor. A disordered region spans residues 658–682 (DSSNPYSERYPRPRHSGYSDNSTVV).

It belongs to the protein kinase superfamily. Ser/Thr protein kinase family. CRK subfamily.

The protein localises to the membrane. Functionally, involved in disease resistance. Required for NPR1/NH1-mediated immunity to the bacterial blight pathogen Xanthomomas oryzae pv. oryzae (Xoo). Required for the benzothiadiazole (BTH)-induced immune response. Possesses kinase activity in vitro. The chain is Cysteine-rich receptor-like protein kinase 6 from Oryza sativa subsp. japonica (Rice).